A 360-amino-acid polypeptide reads, in one-letter code: Alpha-2-macroglobulin receptor-associated protein (360 aa).

A signal peptide spans 1 to 33 (MAPLRDRVSTLPRLQLLVLLLLPLLLVPQPIAG). A phosphoserine mark is found at Ser-53 and Ser-138. Positions 222 to 302 (SKHSELKDRL…KHNHYQKQLE (81 aa)) form a coiled coil. Residues 240–356 (RLRKVSHQGY…DLSSRVSRAR (117 aa)) are LDL receptor binding. An N-linked (GlcNAc...) asparagine glycan is attached at Asn-271. A Prevents secretion from ER motif is present at residues 357–360 (HNEL).

The protein belongs to the alpha-2-MRAP family. Interacts with the LRP1/alpha-2-macroglobulin receptor heavy and light chains; the interaction is transient and coincides with a reduction of ligand binding by the receptor. Interacts with LRP2/glycoprotein 330. Interacts with LRP1B; binding is followed by internalization and degradation. Interacts with LDLR. Interacts with SORL1. Interacts with LRP1; this interaction is followed by rapid internalization. Post-translationally, N-glycosylated.

Its subcellular location is the rough endoplasmic reticulum lumen. It is found in the endoplasmic reticulum-Golgi intermediate compartment lumen. The protein resides in the golgi apparatus. The protein localises to the cis-Golgi network. It localises to the golgi apparatus lumen. Its subcellular location is the endosome lumen. It is found in the cell surface. In terms of biological role, molecular chaperone for LDL receptor-related proteins that may regulate their ligand binding activity along the secretory pathway. The protein is Alpha-2-macroglobulin receptor-associated protein (Lrpap1) of Rattus norvegicus (Rat).